A 117-amino-acid polypeptide reads, in one-letter code: Large ribosomal subunit protein bL20 (117 aa).

This sequence belongs to the bacterial ribosomal protein bL20 family.

Binds directly to 23S ribosomal RNA and is necessary for the in vitro assembly process of the 50S ribosomal subunit. It is not involved in the protein synthesizing functions of that subunit. This chain is Large ribosomal subunit protein bL20, found in Rickettsia felis (strain ATCC VR-1525 / URRWXCal2) (Rickettsia azadi).